The primary structure comprises 190 residues: Glucose-6-phosphate isomerase (190 aa).

Fe cation-binding residues include His-89, His-91, Glu-98, and His-137.

It belongs to the archaeal-type GPI family. In terms of assembly, homodimer. Fe cation is required as a cofactor.

It is found in the cytoplasm. The enzyme catalyses alpha-D-glucose 6-phosphate = beta-D-fructose 6-phosphate. It participates in carbohydrate degradation; glycolysis; D-glyceraldehyde 3-phosphate and glycerone phosphate from D-glucose: step 2/4. Its activity is regulated as follows. Inhibited by mannose 6-phosphate, fructose 1-phosphate and fructose 1,6-bisphosphate. Its activity is also inhibited by Cobalt (II) ions &lt; EDTA &lt; nickel (II) ions &lt; zinc (II) ions &lt;&lt; cadmium (II) ions &lt; copper (II) ions. Sodium and potassium ions and manganese ions show little or no effect on activity. The chain is Glucose-6-phosphate isomerase (pgiA) from Thermococcus litoralis.